We begin with the raw amino-acid sequence, 1505 residues long: Homeobox protein cut-like 1 (1505 aa).

Residues 56-407 are a coiled coil; that stretch reads LLKSFQGEID…ALRISNSDLS (352 aa). Polar residues-rich tracts occupy residues 396–407 and 440–451; these read NAALRISNSDLS and EQASNTNGTHQF. Disordered regions lie at residues 396–455, 512–552, 646–669, and 682–704; these read NAAL…SPAG, YSTN…EEMD, PKRR…GSDE, and LQVQ…NSDD. The span at 516 to 546 shows a compositional bias: low complexity; sequence SISSQSPLQQSPDVNGMAPSPSQSESAGSVS. Position 540 is a phosphoserine (glutamate 540). Residues 542–629 constitute a DNA-binding region (CUT 1); the sequence is AGSVSEGEEM…ILALRSIQGR (88 aa). The span at 694–703 shows a compositional bias: low complexity; sequence SSASGSGNSD. Phosphoserine is present on serine 763. Residues 768–802 form a disordered region; sequence SAAPEAGASALPNPPALKKEAQDAPGLDPQGAADC. Residues lysine 785, lysine 811, and lysine 842 each participate in a glycyl lysine isopeptide (Lys-Gly) (interchain with G-Cter in SUMO2) cross-link. Residues 815 to 853 show a composition bias toward basic and acidic residues; sequence GRSGAWKDHWWSAVQPERRNAASSEEAKAEETGGGKEKG. Residues 815–930 form a disordered region; sequence GRSGAWKDHW…KPTKPSVPPL (116 aa). Polar residues-rich tracts occupy residues 868–877 and 887–911; these read SQLQGPSSSE and SPYS…NSPL. Serine 909 is subject to Phosphoserine. The segment at residues 934 to 1021 is a DNA-binding region (CUT 2); that stretch reads QYEVYMYQEV…QGVLPVQGQQ (88 aa). Residues 1036–1049 are compositionally biased toward polar residues; the sequence is LQQGCVSSESTPKT. A disordered region spans residues 1036-1110; it reads LQQGCVSSES…QPTTPLPLSG (75 aa). Residues 1050–1066 show a composition bias toward low complexity; it reads SASCSPAPESPMSSSES. Serine 1059 and serine 1069 each carry phosphoserine. Positions 1117–1204 form a DNA-binding region, CUT 3; the sequence is QELVAMSPEL…VEKLMDMKRM (88 aa). Positions 1210–1247 are disordered; that stretch reads MKRRHSSVSDSQPCEPPSVGTEYSQGASPQPQHQLKKP. Residues 1230–1242 show a composition bias toward polar residues; sequence TEYSQGASPQPQH. Residues 1244–1303 constitute a DNA-binding region (homeobox); that stretch reads LKKPRVVLAPEEKEALKRAYQQKPYPSPKTIEDLATQLNLKTSTVINWFHNYRSRIRREL. Residue serine 1270 is modified to Phosphoserine. Lysine 1284 is covalently cross-linked (Glycyl lysine isopeptide (Lys-Gly) (interchain with G-Cter in SUMO2)). The tract at residues 1312–1480 is disordered; sequence SQGQAGASDS…SRDNPLRKKK (169 aa). Over residues 1316-1333 the composition is skewed to low complexity; the sequence is AGASDSPSARSGRAAPSS. Serine 1337 is subject to Phosphoserine. 2 stretches are compositionally biased toward basic and acidic residues: residues 1353–1368 and 1384–1394; these read EEPK…EVPR and DDARDDDHEGG. Low complexity-rich tracts occupy residues 1405-1436 and 1443-1455; these read PASA…AAPS and NSSS…RPSS. Serine 1455 carries the post-translational modification Phosphoserine. Residues 1467 to 1476 are compositionally biased toward basic and acidic residues; sequence GARDSRDNPL. Phosphoserine occurs at positions 1486 and 1496.

It belongs to the CUT homeobox family. Interacts with BANP. Interacts with SATB1 (via DNA-binding domains); the interaction inhibits the attachment of both proteins to DNA. Phosphorylated by PKA. Post-translationally, as cells progress into S phase, a fraction of CUX1 molecules is proteolytically processed into N-terminally truncated proteins of 110 kDa by CTSL. Cell cycle-dependent processing of CUX1 serves to generate a CDP/Cux p110 with distinct DNA binding and transcriptional properties.

It is found in the nucleus. Its function is as follows. Transcription factor involved in the control of neuronal differentiation in the brain. Regulates dendrite development and branching, and dendritic spine formation in cortical layers II-III. Also involved in the control of synaptogenesis. In addition, it has probably a broad role in mammalian development as a repressor of developmentally regulated gene expression. May act by preventing binding of positively-activing CCAAT factors to promoters. Component of nf-munr repressor; binds to the matrix attachment regions (MARs) (5' and 3') of the immunoglobulin heavy chain enhancer. Represses T-cell receptor (TCR) beta enhancer function by binding to MARbeta, an ATC-rich DNA sequence located upstream of the TCR beta enhancer. Binds to the TH enhancer; may require the basic helix-loop-helix protein TCF4 as a coactivator. Plays a role in cell cycle progression, in particular at the G1/S transition. As cells progress into S phase, a fraction of CUX1 molecules is proteolytically processed into N-terminally truncated proteins of 110 kDa. While CUX1 only transiently binds to DNA and carries the CCAAT-displacement activity, CDP/Cux p110 makes a stable interaction with DNA and stimulates expression of genes such as POLA1. In Homo sapiens (Human), this protein is Homeobox protein cut-like 1.